The chain runs to 288 residues: NAD(P)H-hydrate epimerase (288 aa).

The transit peptide at Met-1 to Tyr-59 directs the protein to the mitochondrion. The YjeF N-terminal domain maps to Ala-65–Leu-275. Residue Asn-119–Asp-123 participates in (6S)-NADPHX binding. Asn-120 lines the K(+) pocket. Lys-144 carries the post-translational modification N6-succinyllysine. Asp-185 contacts K(+). Residues Gly-189–Glu-195 and Asp-218 contribute to the (6S)-NADPHX site. Residue Ser-221 coordinates K(+).

This sequence belongs to the NnrE/AIBP family. As to quaternary structure, homodimer. Interacts with APOA1 and APOA2. The cofactor is K(+). Post-translationally, undergoes physiological phosphorylation during sperm capacitation, downstream to PKA activation.

Its subcellular location is the mitochondrion. It localises to the secreted. The catalysed reaction is (6R)-NADHX = (6S)-NADHX. It catalyses the reaction (6R)-NADPHX = (6S)-NADPHX. Catalyzes the epimerization of the S- and R-forms of NAD(P)HX, a damaged form of NAD(P)H that is a result of enzymatic or heat-dependent hydration. This is a prerequisite for the S-specific NAD(P)H-hydrate dehydratase to allow the repair of both epimers of NAD(P)HX. Accelerates cholesterol efflux from endothelial cells to high-density lipoprotein (HDL) and thereby regulates angiogenesis. The sequence is that of NAD(P)H-hydrate epimerase from Sus scrofa (Pig).